A 290-amino-acid chain; its full sequence is 4-hydroxy-tetrahydrodipicolinate synthase (290 aa).

Thr-44 is a pyruvate binding site. The active-site Proton donor/acceptor is the Tyr-132. Residue Lys-160 is the Schiff-base intermediate with substrate of the active site. A pyruvate-binding site is contributed by Ile-202.

This sequence belongs to the DapA family. In terms of assembly, homotetramer; dimer of dimers.

Its subcellular location is the cytoplasm. It carries out the reaction L-aspartate 4-semialdehyde + pyruvate = (2S,4S)-4-hydroxy-2,3,4,5-tetrahydrodipicolinate + H2O + H(+). The protein operates within amino-acid biosynthesis; L-lysine biosynthesis via DAP pathway; (S)-tetrahydrodipicolinate from L-aspartate: step 3/4. Catalyzes the condensation of (S)-aspartate-beta-semialdehyde [(S)-ASA] and pyruvate to 4-hydroxy-tetrahydrodipicolinate (HTPA). This is 4-hydroxy-tetrahydrodipicolinate synthase from Alkaliphilus oremlandii (strain OhILAs) (Clostridium oremlandii (strain OhILAs)).